A 301-amino-acid chain; its full sequence is Acetylglutamate kinase (301 aa).

Residues 68-69 (GG), arginine 90, and asparagine 195 each bind substrate.

The protein belongs to the acetylglutamate kinase family. ArgB subfamily.

It localises to the cytoplasm. The enzyme catalyses N-acetyl-L-glutamate + ATP = N-acetyl-L-glutamyl 5-phosphate + ADP. It functions in the pathway amino-acid biosynthesis; L-arginine biosynthesis; N(2)-acetyl-L-ornithine from L-glutamate: step 2/4. In terms of biological role, catalyzes the ATP-dependent phosphorylation of N-acetyl-L-glutamate. The sequence is that of Acetylglutamate kinase from Pseudomonas putida (strain W619).